The chain runs to 104 residues: Large ribosomal subunit protein uL24 (104 aa).

This sequence belongs to the universal ribosomal protein uL24 family. In terms of assembly, part of the 50S ribosomal subunit.

In terms of biological role, one of two assembly initiator proteins, it binds directly to the 5'-end of the 23S rRNA, where it nucleates assembly of the 50S subunit. One of the proteins that surrounds the polypeptide exit tunnel on the outside of the subunit. This chain is Large ribosomal subunit protein uL24, found in Bartonella tribocorum (strain CIP 105476 / IBS 506).